The following is a 133-amino-acid chain: MQLFVRAQELHTLEVTGRETVAQIKAHVASLEGIAPEDQVVLLAGTPLEDEATLGQCGVEALSTLEVAGRMLGGKVHGSLARVGKVRGQTLKVAKQEKKKKRTGRAKRRMQYNRRFVNVVPTFGKKKGPNANS.

Residues 1 to 74 form the Ubiquitin-like domain; it reads MQLFVRAQEL…LEVAGRMLGG (74 aa). The residue at position 125 (Lys-125) is an N6-succinyllysine.

The protein in the N-terminal section; belongs to the ubiquitin family. It in the C-terminal section; belongs to the eukaryotic ribosomal protein eS30 family. Component of the 40S subunit of the ribosome. Post-translationally, FUBI is cleaved from ribosomal protein S30 by the deubiquitinase USP36 before the assembly of ribosomal protein S30 into pre-40S ribosomal particles. FUBI removal from ribosomal protein S30 is a crucial event for the final maturation of pre-40S particles.

Its subcellular location is the cytoplasm. It is found in the nucleus. Functionally, may have pro-apoptotic activity. Its function is as follows. Component of the 40S subunit of the ribosome. Contributes to the assembly and function of 40S ribosomal subunits. In Oryctolagus cuniculus (Rabbit), this protein is Ubiquitin-like FUBI-ribosomal protein eS30 fusion protein (FAU).